Consider the following 409-residue polypeptide: Probable aspartate/prephenate aminotransferase (409 aa).

L-aspartate is bound by residues Gly-39, Trp-125, and Asn-175. Lys-239 carries the post-translational modification N6-(pyridoxal phosphate)lysine. An L-aspartate-binding site is contributed by Arg-375.

The protein belongs to the class-I pyridoxal-phosphate-dependent aminotransferase family. In terms of assembly, homodimer. The cofactor is pyridoxal 5'-phosphate.

The protein localises to the cytoplasm. The enzyme catalyses L-aspartate + 2-oxoglutarate = oxaloacetate + L-glutamate. It catalyses the reaction L-arogenate + 2-oxoglutarate = prephenate + L-glutamate. Catalyzes the reversible conversion of aspartate and 2-oxoglutarate to glutamate and oxaloacetate. Can also transaminate prephenate in the presence of glutamate. This chain is Probable aspartate/prephenate aminotransferase (aatA), found in Rickettsia felis (strain ATCC VR-1525 / URRWXCal2) (Rickettsia azadi).